A 195-amino-acid polypeptide reads, in one-letter code: Large ribosomal subunit protein uL5 (195 aa).

Residues 1-25 are disordered; it reads MARVPPPALKKDKKEKKPPKDNSKN.

This sequence belongs to the universal ribosomal protein uL5 family. Component of the large ribosomal subunit.

The protein resides in the nucleus. It localises to the cytoplasm. Its function is as follows. Component of the ribosome, a large ribonucleoprotein complex responsible for the synthesis of proteins in the cell. The small ribosomal subunit (SSU) binds messenger RNAs (mRNAs) and translates the encoded message by selecting cognate aminoacyl-transfer RNA (tRNA) molecules. The large subunit (LSU) contains the ribosomal catalytic site termed the peptidyl transferase center (PTC), which catalyzes the formation of peptide bonds, thereby polymerizing the amino acids delivered by tRNAs into a polypeptide chain. The nascent polypeptides leave the ribosome through a tunnel in the LSU and interact with protein factors that function in enzymatic processing, targeting, and the membrane insertion of nascent chains at the exit of the ribosomal tunnel. The sequence is that of Large ribosomal subunit protein uL5 (RpL11) from Spodoptera frugiperda (Fall armyworm).